The sequence spans 59 residues: Gonadotropin-releasing hormone receptor (59 aa).

At 1 to 2 (VA) the chain is on the cytoplasmic side. Residues 3–23 (FATSFTVCWTPYYVLGIWYWF) traverse the membrane as a helical segment. At 24-37 (DPEMLNRVSDPVNH) the chain is on the extracellular side. Residues 38-58 (FFFLFAFLNPCFDPLIYGYFS) form a helical membrane-spanning segment. Leu-59 is a topological domain (cytoplasmic).

Belongs to the G-protein coupled receptor 1 family.

The protein localises to the cell membrane. Its function is as follows. Receptor for gonadotropin releasing hormone (GnRH) that mediates the action of GnRH to stimulate the secretion of the gonadotropic hormones luteinizing hormone (LH) and follicle-stimulating hormone (FSH). This receptor mediates its action by association with G-proteins that activate a phosphatidylinositol-calcium second messenger system. The protein is Gonadotropin-releasing hormone receptor (GNRHR) of Macaca mulatta (Rhesus macaque).